The following is a 418-amino-acid chain: EPS I polysaccharide export inner membrane protein EpsF (418 aa).

10 helical membrane-spanning segments follow: residues 21–41 (VLVV…LPII), 45–65 (CAAI…LATA), 142–162 (PLLV…IAIY), 170–190 (YVVF…GSAI), 222–242 (AGTH…VLFL), 262–282 (LIVL…EFVM), 296–316 (SAWE…AWLL), 326–346 (MAFL…PAVG), 347–367 (ARLF…FFFA), and 377–397 (KTLA…IVSA).

To S.marcescens SfuB.

The protein resides in the cell inner membrane. Probably involved in polymerization and/or export of exopolysaccharide EPS I which functions as a virulence factor. May play a role in export of EPS I or its intermediates across the membranes. This Ralstonia nicotianae (strain ATCC BAA-1114 / GMI1000) (Ralstonia solanacearum) protein is EPS I polysaccharide export inner membrane protein EpsF (epsF).